Consider the following 125-residue polypeptide: Glycine cleavage system H protein (125 aa).

The Lipoyl-binding domain maps to 23-104; that stretch reads VVYIGITDYA…PYENWILKVK (82 aa). Residue Lys64 is modified to N6-lipoyllysine.

The protein belongs to the GcvH family. In terms of assembly, the glycine cleavage system is composed of four proteins: P, T, L and H. It depends on (R)-lipoate as a cofactor.

The glycine cleavage system catalyzes the degradation of glycine. The H protein shuttles the methylamine group of glycine from the P protein to the T protein. This is Glycine cleavage system H protein from Clostridioides difficile (strain 630) (Peptoclostridium difficile).